Here is a 101-residue protein sequence, read N- to C-terminus: Small ribosomal subunit protein uS14 (101 aa).

Belongs to the universal ribosomal protein uS14 family. As to quaternary structure, part of the 30S ribosomal subunit. Contacts proteins S3 and S10.

Binds 16S rRNA, required for the assembly of 30S particles and may also be responsible for determining the conformation of the 16S rRNA at the A site. The polypeptide is Small ribosomal subunit protein uS14 (Rhizobium johnstonii (strain DSM 114642 / LMG 32736 / 3841) (Rhizobium leguminosarum bv. viciae)).